The chain runs to 80 residues: Ubiquitin-like protein NEDD8-like protein 2 (80 aa).

Belongs to the ubiquitin family.

This is Ubiquitin-like protein NEDD8-like protein 2 (nedd8l2) from Dictyostelium discoideum (Social amoeba).